The chain runs to 190 residues: Elongation factor P-like protein (190 aa).

It belongs to the elongation factor P family.

The protein is Elongation factor P-like protein of Salmonella gallinarum (strain 287/91 / NCTC 13346).